Reading from the N-terminus, the 304-residue chain is HPr kinase/phosphorylase (304 aa).

Catalysis depends on residues His136 and Lys157. 151 to 158 contributes to the ATP binding site; sequence GESGIGKS. Ser158 contributes to the Mg(2+) binding site. The active-site Proton acceptor; for phosphorylation activity. Proton donor; for dephosphorylation activity is Asp175. An important for the catalytic mechanism of both phosphorylation and dephosphorylation region spans residues 198 to 207; that stretch reads LEVRGIGIID. A Mg(2+)-binding site is contributed by Glu199. The active site involves Arg240. Residues 261-266 are important for the catalytic mechanism of dephosphorylation; sequence PVRPGR.

Belongs to the HPrK/P family. In terms of assembly, homohexamer. It depends on Mg(2+) as a cofactor.

It catalyses the reaction [HPr protein]-L-serine + ATP = [HPr protein]-O-phospho-L-serine + ADP + H(+). The catalysed reaction is [HPr protein]-O-phospho-L-serine + phosphate + H(+) = [HPr protein]-L-serine + diphosphate. Functionally, catalyzes the ATP- as well as the pyrophosphate-dependent phosphorylation of a specific serine residue in HPr, a phosphocarrier protein of the phosphoenolpyruvate-dependent sugar phosphotransferase system (PTS). HprK/P also catalyzes the pyrophosphate-producing, inorganic phosphate-dependent dephosphorylation (phosphorolysis) of seryl-phosphorylated HPr (P-Ser-HPr). The two antagonistic activities of HprK/P are regulated by several intracellular metabolites, which change their concentration in response to the absence or presence of rapidly metabolisable carbon sources (glucose, fructose, etc.) in the growth medium. Therefore, by controlling the phosphorylation state of HPr, HPrK/P is a sensor enzyme that plays a major role in the regulation of carbon metabolism and sugar transport: it mediates carbon catabolite repression (CCR), and regulates PTS-catalyzed carbohydrate uptake and inducer exclusion. This chain is HPr kinase/phosphorylase, found in Clostridium botulinum (strain Alaska E43 / Type E3).